The sequence spans 144 residues: Augurin-B (144 aa).

The N-terminal stretch at 1–18 (MSLHSLCVPTILLISVLS) is a signal peptide. A propeptide spanning residues 19–68 (ICLSSGGSSDSKLHRILIKRDAKEIESRPKAYISVQQSKAKEFLSGLHRT) is cleaved from the precursor. The disordered stretch occupies residues 109 to 144 (RSNDQGRQHHHDENAPMSQQDPRYNRHGANVNYDYY). The segment covering 112 to 122 (DQGRQHHHDEN) has biased composition (basic and acidic residues).

It belongs to the augurin family.

It localises to the secreted. The protein localises to the cytoplasm. The protein resides in the apical cell membrane. Probable hormone. Required for the proper formation of the central nervous system by attenuating cell proliferation during development. The chain is Augurin-B from Danio rerio (Zebrafish).